The sequence spans 396 residues: E3 ubiquitin-protein transferase MAEA (396 aa).

An extracellular and involved in cell to cell contact region spans residues 1–124 (MAVQESAVQL…AAASVWKRKR (124 aa)). Threonine 28 is subject to Phosphothreonine. The 33-residue stretch at 121 to 153 (KRKRMDRMMVEHLLRCGYYNTAVKLARQSGIED) folds into the LisH domain. The CTLH domain occupies 159 to 216 (MFLTAKEVEESLERRETATCLAWCHDNKSRLRKMKSCLEFSLRIQEFIELIRQNKRLD). The segment at 314–381 (CPVCSRSLNK…QDDKVVCPRT (68 aa)) adopts an RING-Gid-type zinc-finger fold.

Identified in the CTLH complex that contains GID4, RANBP9 and/or RANBP10, MKLN1, MAEA, RMND5A (or alternatively its paralog RMND5B), GID8, ARMC8, WDR26 and YPEL5. Within this complex, MAEA, RMND5A (or alternatively its paralog RMND5B), GID8, WDR26, and RANBP9 and/or RANBP10 form the catalytic core, while GID4, MKLN1, ARMC8 and YPEL5 have ancillary roles. Interacts with F-actin. Autoubiquitinated as component of the CTLH E3 ubiquitin-protein ligase complex (in vitro).

It localises to the cytoplasm. The protein resides in the nucleus. It is found in the nucleoplasm. The protein localises to the nucleus matrix. Its subcellular location is the cell membrane. It localises to the cytoskeleton. It catalyses the reaction S-ubiquitinyl-[E2 ubiquitin-conjugating enzyme]-L-cysteine + [acceptor protein]-L-lysine = [E2 ubiquitin-conjugating enzyme]-L-cysteine + N(6)-ubiquitinyl-[acceptor protein]-L-lysine.. In terms of biological role, core component of the CTLH E3 ubiquitin-protein ligase complex that selectively accepts ubiquitin from UBE2H and mediates ubiquitination and subsequent proteasomal degradation of the transcription factor HBP1. MAEA and RMND5A are both required for catalytic activity of the CTLH E3 ubiquitin-protein ligase complex. MAEA is required for normal cell proliferation. The CTLH E3 ubiquitin-protein ligase complex is not required for the degradation of enzymes involved in gluconeogenesis, such as FBP1. Plays a role in erythroblast enucleation during erythrocyte maturation and in the development of mature macrophages. Mediates the attachment of erythroid cell to mature macrophages; this MAEA-mediated contact inhibits erythroid cell apoptosis. Participates in erythroblastic island formation, which is the functional unit of definitive erythropoiesis. Associates with F-actin to regulate actin distribution in erythroblasts and macrophages. May contribute to nuclear architecture and cells division events. This chain is E3 ubiquitin-protein transferase MAEA (MAEA), found in Macaca fascicularis (Crab-eating macaque).